The primary structure comprises 246 residues: UDP-N-acetyl-D-mannosaminuronic acid transferase (246 aa).

The protein belongs to the glycosyltransferase 26 family.

It carries out the reaction UDP-N-acetyl-alpha-D-mannosaminouronate + N-acetyl-alpha-D-glucosaminyl-di-trans,octa-cis-undecaprenyl diphosphate = beta-D-ManNAcA-(1-&gt;4)-alpha-D-GlcNAc-di-trans,octa-cis-undecaprenyl diphosphate + UDP + H(+). It participates in bacterial outer membrane biogenesis; enterobacterial common antigen biosynthesis. In terms of biological role, catalyzes the synthesis of Und-PP-GlcNAc-ManNAcA (Lipid II), the second lipid-linked intermediate involved in enterobacterial common antigen (ECA) synthesis. The polypeptide is UDP-N-acetyl-D-mannosaminuronic acid transferase (Escherichia coli (strain K12)).